Here is a 619-residue protein sequence, read N- to C-terminus: Chaperone protein HscA homolog (619 aa).

Belongs to the heat shock protein 70 family.

Chaperone involved in the maturation of iron-sulfur cluster-containing proteins. Has a low intrinsic ATPase activity which is markedly stimulated by HscB. This Laribacter hongkongensis (strain HLHK9) protein is Chaperone protein HscA homolog.